The following is a 573-amino-acid chain: Isocitrate dehydrogenase kinase/phosphatase (573 aa).

Residues 317-323 and Lys338 contribute to the ATP site; that span reads APGVRGM. The active site involves Asp373.

It belongs to the AceK family.

The protein localises to the cytoplasm. The enzyme catalyses L-seryl-[isocitrate dehydrogenase] + ATP = O-phospho-L-seryl-[isocitrate dehydrogenase] + ADP + H(+). In terms of biological role, bifunctional enzyme which can phosphorylate or dephosphorylate isocitrate dehydrogenase (IDH) on a specific serine residue. This is a regulatory mechanism which enables bacteria to bypass the Krebs cycle via the glyoxylate shunt in response to the source of carbon. When bacteria are grown on glucose, IDH is fully active and unphosphorylated, but when grown on acetate or ethanol, the activity of IDH declines drastically concomitant with its phosphorylation. This Pseudomonas fluorescens (strain ATCC BAA-477 / NRRL B-23932 / Pf-5) protein is Isocitrate dehydrogenase kinase/phosphatase.